Consider the following 402-residue polypeptide: 3-dehydroquinate synthase (402 aa).

It belongs to the archaeal-type DHQ synthase family.

It catalyses the reaction 2-amino-2,3,7-trideoxy-D-lyxo-hept-6-ulosonate + NAD(+) + H2O = 3-dehydroquinate + NH4(+) + NADH + H(+). In terms of biological role, catalyzes the oxidative deamination and cyclization of 2-amino-3,7-dideoxy-D-threo-hept-6-ulosonic acid (ADH) to yield 3-dehydroquinate (DHQ), which is fed into the canonical shikimic pathway of aromatic amino acid biosynthesis. In Methanopyrus kandleri (strain AV19 / DSM 6324 / JCM 9639 / NBRC 100938), this protein is 3-dehydroquinate synthase.